An 878-amino-acid chain; its full sequence is MTKFTTEEVRSKFITYFKANNHTHVPASSLIPHNDPSLMFVNSGMVQFKNVFTGQEKRPYNKAVTSQKSLRAGGKHNDLENVGYTARHHTFFEMLGNFSFGDYFKEQAIYYAWNLLTKEFELPKDKLYVTVYHTDEEAASYWKKIAGFRDDRIIRIKTNDNFWSMGDTGPCGPCSEIFYDHGEQIYGGLPGTKDEDGDRFIEIWNMVFMQYEQIDKDTRIELPQKSIDTGMGLERMTAVLQHVNNNYDIDLFQEIINFTENIVKVKIEGEAKFSYRVIADHLRASSFLIADGVIPSNEGRGYVLRRIMRRAMRHAHMLGSKEPLMYKLLPKLVDLMGNVYPELKRAESFISSILEQEEIRFKTTLERGLKLLTEETETLTKGNELSGEIAFKLYDTYGFPLDLTEDILKNRDISVDHKRFEEQMLAQKERARKSWLGSGESKTDQLWFDIKEQHGSTEFLGYTLNEAECKIIALIKDNNLVNDIKEIDTQFLLISNQTPFYGESGGQMGDIGMIFSKDSEIEVIDTLKYLGSIIVHKCILKKGQIKIGENANFSIDIKYRQNLRIHHSATHILHAVLHEVLGKHVTQKGSLVAPTYLRFDISHSKAVTNEEITLIEDKVNEIIRDNHEVDTTLMTTEDAVKQGAMALFGEKYDSEVRVVKMGETSLELCGGTHVRRTGDIGCFKITSESAIAAGVRRIEAVCGEFVIKLMREKDSLLKSIESSLKTNKNELITKVNNILERNKELEKELEKVHLARLDLSIEQIEKQAEDIKGVKLIYRYIENLDNKVLRQAAENLTKKVEDLIVVYITGNNDKLSITVAVSKAITDKYKAGIIAKELSLFLGGSGGGGQASLAQAGGNDIGKLTNIQEKLHGLLTVS.

4 residues coordinate Zn(2+): histidine 567, histidine 571, cysteine 669, and histidine 673.

The protein belongs to the class-II aminoacyl-tRNA synthetase family. Zn(2+) is required as a cofactor.

It localises to the cytoplasm. It carries out the reaction tRNA(Ala) + L-alanine + ATP = L-alanyl-tRNA(Ala) + AMP + diphosphate. Catalyzes the attachment of alanine to tRNA(Ala) in a two-step reaction: alanine is first activated by ATP to form Ala-AMP and then transferred to the acceptor end of tRNA(Ala). Also edits incorrectly charged Ser-tRNA(Ala) and Gly-tRNA(Ala) via its editing domain. The chain is Alanine--tRNA ligase from Rickettsia felis (strain ATCC VR-1525 / URRWXCal2) (Rickettsia azadi).